The primary structure comprises 256 residues: Probable aquaporin TIP5-1 (256 aa).

Met-1 is subject to N-acetylmethionine. The next 5 membrane-spanning stretches (helical) occupy residues 24–44 (CYVS…GSVM), 57–77 (PFGV…SVYI), 89–109 (AVTF…MFYW), 144–164 (FGAS…VFTA), and 171–191 (LPLA…VLAA). An NPA 1 motif is present at residues 87–89 (NPA). The short motif at 200-202 (NPA) is the NPA 2 element. A helical transmembrane segment spans residues 222-242 (VGPLLGGATAALVYDNVVVPV). At Ser-249 the chain carries Phosphoserine.

This sequence belongs to the MIP/aquaporin (TC 1.A.8) family. TIP (TC 1.A.8.10) subfamily.

It is found in the membrane. Potential aquaporin, which may facilitate the transport of water and small neutral solutes across cell membranes. In Arabidopsis thaliana (Mouse-ear cress), this protein is Probable aquaporin TIP5-1 (TIP5-1).